The primary structure comprises 186 residues: Photosystem I assembly protein Ycf4 (186 aa).

The next 2 helical transmembrane spans lie at Trp26–Phe46 and Ile66–Ile86.

This sequence belongs to the Ycf4 family.

It is found in the plastid. The protein resides in the chloroplast thylakoid membrane. Seems to be required for the assembly of the photosystem I complex. The protein is Photosystem I assembly protein Ycf4 of Pyropia yezoensis (Susabi-nori).